A 297-amino-acid chain; its full sequence is MNIAIRNPVPIRREEGSLQVGLDPNDRIETAKVFAVYGKGGIGKSTTSSNLSVAFSKLGKRVLQIGCDPKHDSTFTLTKRLAPTVIDALEAVNFHSEELRAEDFVVEGYNGVKCVEAGGPPAGTGCGGYVVGQTVKLLKEHHLLEDTDVVVFDVLGDVVCGGFASPLQHADRALIVTANDFDSIFAMNRIVAAIHTKSKNYGVRLGGVIANRSAGTDEIDRFNAAVGLRRLAHFPDLDVVRRSRLKKATLFEMEPTPELKAVTDEYMQLAETLWAGADPCEAVPMKDRDLFEFLGFD.

ATP-binding positions include 41–46 and lysine 70; that span reads GIGKST. Serine 45 lines the Mg(2+) pocket. Positions 126 and 160 each coordinate [4Fe-4S] cluster. ATP contacts are provided by residues 211 to 212 and 235 to 237; these read NR and PDL.

The protein belongs to the NifH/BchL/ChlL family. In terms of assembly, homodimer. Protochlorophyllide reductase is composed of three subunits; BchL, BchN and BchB. The cofactor is [4Fe-4S] cluster.

It catalyses the reaction chlorophyllide a + oxidized 2[4Fe-4S]-[ferredoxin] + 2 ADP + 2 phosphate = protochlorophyllide a + reduced 2[4Fe-4S]-[ferredoxin] + 2 ATP + 2 H2O. It functions in the pathway porphyrin-containing compound metabolism; bacteriochlorophyll biosynthesis (light-independent). Functionally, component of the dark-operative protochlorophyllide reductase (DPOR) that uses Mg-ATP and reduced ferredoxin to reduce ring D of protochlorophyllide (Pchlide) to form chlorophyllide a (Chlide). This reaction is light-independent. The L component serves as a unique electron donor to the NB-component of the complex, and binds Mg-ATP. The chain is Light-independent protochlorophyllide reductase iron-sulfur ATP-binding protein from Methylorubrum extorquens (strain PA1) (Methylobacterium extorquens).